Consider the following 105-residue polypeptide: Nucleoid-associated protein Ccur92_18190 (105 aa).

It belongs to the YbaB/EbfC family. As to quaternary structure, homodimer.

It localises to the cytoplasm. The protein localises to the nucleoid. Functionally, binds to DNA and alters its conformation. May be involved in regulation of gene expression, nucleoid organization and DNA protection. The protein is Nucleoid-associated protein Ccur92_18190 of Campylobacter curvus (strain 525.92).